The sequence spans 351 residues: Columbamine O-methyltransferase (351 aa).

5 residues coordinate S-adenosyl-L-methionine: Gly-198, Asp-221, Asp-241, Met-242, and Lys-255. The active-site Proton acceptor is the His-259.

Belongs to the class I-like SAM-binding methyltransferase superfamily. Cation-independent O-methyltransferase family. COMT subfamily. Homodimer.

It carries out the reaction columbamine + S-adenosyl-L-methionine = palmatine + S-adenosyl-L-homocysteine + H(+). The enzyme catalyses (S)-tetrahydrocolumbamine + S-adenosyl-L-methionine = (S)-tetrahydropalmatine + S-adenosyl-L-homocysteine + H(+). The protein operates within alkaloid biosynthesis; palmatine biosynthesis; palmatine from columbamine: step 1/1. Its function is as follows. Catalyzes the conversion of tetrahydrocolumbamine to (S)-tetrahydropalmatine and of columbamine to palmatine, an isoquinoline alkaloid. In Coptis japonica (Japanese goldthread), this protein is Columbamine O-methyltransferase.